Here is a 196-residue protein sequence, read N- to C-terminus: 7-methyl-GTP pyrophosphatase (196 aa).

Residue Asp-72 is the Proton acceptor of the active site.

It belongs to the Maf family. YceF subfamily. The cofactor is a divalent metal cation.

The protein localises to the cytoplasm. It catalyses the reaction N(7)-methyl-GTP + H2O = N(7)-methyl-GMP + diphosphate + H(+). Its function is as follows. Nucleoside triphosphate pyrophosphatase that hydrolyzes 7-methyl-GTP (m(7)GTP). May have a dual role in cell division arrest and in preventing the incorporation of modified nucleotides into cellular nucleic acids. This Neisseria gonorrhoeae (strain ATCC 700825 / FA 1090) protein is 7-methyl-GTP pyrophosphatase.